The chain runs to 317 residues: MPKTIAFKHDTVLLHETVDMLEVKPNGIYVDATLGGAGHSEYLLSKLTNGHLYSFDQDETAHENAKVRLSEQLAEDKVTLIKSNFRYLKSALAELGVTKIDGILYDLGVSSPQFDDSQRGFSYKKEARLDMRMDQNQTLSAYEVVNDYPYEALVRIFFRYGEDKFSKQIARKIEQARKIKPIETTIELADLIKSALPQKELKKKGHPAKRIFQAIRIEVNDELGAAEESIEQAIDLLKVDGRISVITFHSLEDRLTKTIFKEYSTVNVPKGLPMLPKDMEAKLKLINRKPVLASEEELEFNNRAHSAKLRVAQKQRD.

S-adenosyl-L-methionine contacts are provided by residues 37 to 39 (AGH), D56, F85, D106, and Q113.

This sequence belongs to the methyltransferase superfamily. RsmH family.

Its subcellular location is the cytoplasm. It carries out the reaction cytidine(1402) in 16S rRNA + S-adenosyl-L-methionine = N(4)-methylcytidine(1402) in 16S rRNA + S-adenosyl-L-homocysteine + H(+). In terms of biological role, specifically methylates the N4 position of cytidine in position 1402 (C1402) of 16S rRNA. This Lactococcus lactis subsp. lactis (strain IL1403) (Streptococcus lactis) protein is Ribosomal RNA small subunit methyltransferase H.